A 390-amino-acid chain; its full sequence is Chorismate synthase 1 (390 aa).

Positions 39 and 45 each coordinate NADP(+). The tract at residues 95–117 (EQEEKEMKRKVTKPRPGHADLNG) is disordered. Residues 132–134 (RSS), 253–254 (NA), Gly-298, 313–317 (KPIPT), and Arg-339 contribute to the FMN site.

This sequence belongs to the chorismate synthase family. In terms of assembly, homotetramer. FMNH2 serves as cofactor.

The enzyme catalyses 5-O-(1-carboxyvinyl)-3-phosphoshikimate = chorismate + phosphate. It functions in the pathway metabolic intermediate biosynthesis; chorismate biosynthesis; chorismate from D-erythrose 4-phosphate and phosphoenolpyruvate: step 7/7. In terms of biological role, catalyzes the anti-1,4-elimination of the C-3 phosphate and the C-6 proR hydrogen from 5-enolpyruvylshikimate-3-phosphate (EPSP) to yield chorismate, which is the branch point compound that serves as the starting substrate for the three terminal pathways of aromatic amino acid biosynthesis. This reaction introduces a second double bond into the aromatic ring system. The polypeptide is Chorismate synthase 1 (Bacillus cereus (strain ZK / E33L)).